Reading from the N-terminus, the 506-residue chain is Tyrosine-protein phosphatase non-receptor type substrate 1 (506 aa).

Residues 1-29 (MEPARPAPGRLRPLLCLLLAASNAWTGTA) form the signal peptide. The 116-residue stretch at 30–145 (GDGELQVIQP…SGPGTHLTVS (116 aa)) folds into the Ig-like V-type domain. Residues 30–371 (GDGELQVIQP…PGPNDSNWTS (342 aa)) lie on the Extracellular side of the membrane. Cys55 and Cys121 are disulfide-bonded. N-linked (GlcNAc...) asparagine glycosylation is present at Asn92. Residues 136–159 (SGPGTHLTVSAKPSPPVLSGPTVR) are disordered. 2 Ig-like C1-type domains span residues 148 to 248 (PSPP…ANLS) and 255 to 348 (PTLE…HTLE). Residues Asn167, Asn179, Asn204, Asn210, Asn246, Asn270, Asn292, Asn311, Asn319, Asn344, Asn365, and Asn368 are each glycosylated (N-linked (GlcNAc...) asparagine). Cys170 and Cys228 are oxidised to a cystine. Cysteines 273 and 331 form a disulfide. The disordered stretch occupies residues 344-364 (NHTLEVSAPQKDQDTGQTPGP). Residues 372–392 (IFIVVGVVCALLVALLIAALY) traverse the membrane as a helical segment. Over 393–506 (LLRIRQNKAK…EYASVQVQRK (114 aa)) the chain is Cytoplasmic. A disordered region spans residues 402-468 (KGSTSSTRLH…QARPPPVSED (67 aa)). The segment covering 409–418 (RLHEPEKNTR) has biased composition (basic and acidic residues). The segment covering 419 to 429 (ETTQIQDNNDI) has biased composition (polar residues). Tyr431 carries the phosphotyrosine; by Tyr-kinases modification. An SH2-binding motif is present at residues 432-435 (ADLN). An SH3-binding motif is present at residues 441 to 446 (KSTPKA). Polar residues predominate over residues 444–456 (PKANEPNNHTEYA). A phosphotyrosine; by Tyr-kinases mark is found at Tyr455, Tyr472, and Tyr498. Short sequence motifs (SH2-binding) lie at residues 455-458 (YASI), 472-475 (YADL), and 498-501 (YASV). The tract at residues 480 to 506 (LNRTPKQPAPKPEPSYSEYASVQVQRK) is disordered. Positions 497-506 (EYASVQVQRK) are enriched in polar residues.

Binds PTPN11 when tyrosine-phosphorylated, except in macrophages, where it primarily binds PTPN6. Binds GRB2 in vitro. Binds JAK2 irrespective of its phosphorylation status and forms a stable complex. Binds SCAP1 and/or SCAP2. The resulting complex recruits FYB1. Binds FGR and PTK2B. Interacts with TRIM2. Post-translationally, phosphorylated on tyrosine residues. Highly expressed in spleen macrophages. Detected in skin dendritic cells.

The protein localises to the membrane. Its function is as follows. Immunoglobulin-like cell surface receptor for CD47. Acts as docking protein and induces translocation of PTPN6, PTPN11 and other binding partners from the cytosol to the plasma membrane. Supports adhesion of cerebellar neurons, neurite outgrowth and glial cell attachment. May play a key role in intracellular signaling during synaptogenesis and in synaptic function. Involved in the negative regulation of receptor tyrosine kinase-coupled cellular responses induced by cell adhesion, growth factors or insulin. Mediates negative regulation of phagocytosis, mast cell activation and dendritic cell activation. CD47 binding prevents maturation of immature dendritic cells and inhibits cytokine production by mature dendritic cells. Plays a role in antiviral immunity and limits new world arenavirus infection by decreasing virus internalization. Receptor for THBS1. Interaction with THBS1 stimulates phosphorylation of SIRPA. In response to THBS1, involved in ROS signaling in non-phagocytic cells, stimulating NADPH oxidase-derived ROS production. This chain is Tyrosine-protein phosphatase non-receptor type substrate 1 (SIRPA), found in Bos taurus (Bovine).